Reading from the N-terminus, the 488-residue chain is MTKTERYAQLRSMIPEMRRIKRIHFVGIGGAGMGGIAEVLVNEGYQVSGSDIAQNAVTDRLCLLGAKIQIGHAAENVQQVDVVVVSTAINLENPEILAAKELRIPIVRRAEMLAELMRYRHGVAIAGTHGKTTTTSLIASVYGQAGRDPTFVIGGLLNSAGTNARLGTSRYLIAEADESDASFLHLQPMVSVVTNIEADHMDTYGGDFEKLKSTFVDFLHNLPFYGVAVVCIDDAVVREIMPRIGRQLVTYGFSDDADVQALNFSQQGHQCRFTVRRKGKADLDLVLNLPGQHNVLNALAAIAVATEDEIDDSAITQALVEFQGIGRRFQHLGKFATPKGEVMLVDDYGHHPSEVAATIKAARAGWPDKRLVMAYQPHRYTRTRDLYEDFVEVLSQVDCLLLLDVYSAGEAPITGADGRALCRSIRLRGQLDPIFIASPDQLAEVLPDVLQEGDLLLTQGAGNIGALSRLLATTELGFAVAELPAQAS.

127–133 (GTHGKTT) contributes to the ATP binding site.

Belongs to the MurCDEF family.

It is found in the cytoplasm. The enzyme catalyses UDP-N-acetyl-alpha-D-muramate + L-alanine + ATP = UDP-N-acetyl-alpha-D-muramoyl-L-alanine + ADP + phosphate + H(+). It functions in the pathway cell wall biogenesis; peptidoglycan biosynthesis. In terms of biological role, cell wall formation. This chain is UDP-N-acetylmuramate--L-alanine ligase, found in Shewanella baltica (strain OS223).